We begin with the raw amino-acid sequence, 125 residues long: Holo-[acyl-carrier-protein] synthase (125 aa).

Mg(2+) contacts are provided by aspartate 8 and glutamate 56.

Belongs to the P-Pant transferase superfamily. AcpS family. Mg(2+) is required as a cofactor.

The protein localises to the cytoplasm. It catalyses the reaction apo-[ACP] + CoA = holo-[ACP] + adenosine 3',5'-bisphosphate + H(+). Transfers the 4'-phosphopantetheine moiety from coenzyme A to a Ser of acyl-carrier-protein. This Borrelia turicatae (strain 91E135) protein is Holo-[acyl-carrier-protein] synthase.